Reading from the N-terminus, the 180-residue chain is MASSMLSSATMVASPAQATMVAPFNGLKSSAAFPATRKANNDITSITSNGGRVNCMQVWPPIGKKKFETLSYLPDLTDSELAKEVDYLIRNKWIPCVEFELEHGFVYREHGNSPGYYDGRYWTMWKLPLFGCTDSAQVLKEVEECKKEYPNAFIRIIGFDNTRQVQCISFIAYKPPSFTG.

Residues 1–54 (MASSMLSSATMVASPAQATMVAPFNGLKSSAAFPATRKANNDITSITSNGGRVN) constitute a chloroplast transit peptide. Residue Ser113 is modified to Phosphoserine.

It belongs to the RuBisCO small chain family. As to quaternary structure, heterohexadecamer of 8 large and 8 small subunits.

It is found in the plastid. Its subcellular location is the chloroplast membrane. The protein localises to the chloroplast stroma. Its function is as follows. RuBisCO catalyzes two reactions: the carboxylation of D-ribulose 1,5-bisphosphate, the primary event in carbon dioxide fixation, as well as the oxidative fragmentation of the pentose substrate. Both reactions occur simultaneously and in competition at the same active site. Although the small subunit is not catalytic it is essential for maximal activity. The chain is Ribulose bisphosphate carboxylase small subunit 1A, chloroplastic (RBCS-1A) from Arabidopsis thaliana (Mouse-ear cress).